The sequence spans 309 residues: CDK-activating kinase assembly factor MAT1 (309 aa).

Met-1 carries the post-translational modification N-acetylmethionine. An RING-type zinc finger spans residues 6–50 (CPRCKTTKYRNPSLKLMVNVCGHTLCESCVDLLFVRGAGNCPECG). Thr-51 carries the phosphothreonine modification. Residues 142-161 (REQEELEEALEVERQEHEQR) form the UIM domain. At Ser-279 the chain carries Phosphoserine.

In terms of assembly, associates primarily with CDK7 and cyclin H to form the CAK complex. CAK can further associate with the core-TFIIH to form the TFIIH basal transcription factor.

The protein resides in the nucleus. Functionally, stabilizes the cyclin H-CDK7 complex to form a functional CDK-activating kinase (CAK) enzymatic complex. CAK activates the cyclin-associated kinases CDK1, CDK2, CDK4 and CDK6 by threonine phosphorylation. CAK complexed to the core-TFIIH basal transcription factor activates RNA polymerase II by serine phosphorylation of the repetitive C-terminal domain (CTD) of its large subunit (POLR2A), allowing its escape from the promoter and elongation of the transcripts. Involved in cell cycle control and in RNA transcription by RNA polymerase II. The sequence is that of CDK-activating kinase assembly factor MAT1 (Mnat1) from Mus musculus (Mouse).